Reading from the N-terminus, the 219-residue chain is PKHD-type hydroxylase AM1_3707 (219 aa).

One can recognise a Fe2OG dioxygenase domain in the interval serine 78 to serine 172. Residues histidine 96, aspartate 98, and histidine 153 each coordinate Fe cation. Residue arginine 163 coordinates 2-oxoglutarate.

The cofactor is Fe(2+). L-ascorbate is required as a cofactor.

This Acaryochloris marina (strain MBIC 11017) protein is PKHD-type hydroxylase AM1_3707.